Here is a 377-residue protein sequence, read N- to C-terminus: uncharacterized protein (377 aa).

A helical membrane pass occupies residues 21–43 (YFISFSALFLIAYMFVAAVPLGA).

Its subcellular location is the membrane. This is an uncharacterized protein from Treponema pallidum (strain Nichols).